A 172-amino-acid chain; its full sequence is 3-hydroxydecanoyl-[acyl-carrier-protein] dehydratase (172 aa).

The active site involves H71.

Belongs to the thioester dehydratase family. FabA subfamily. As to quaternary structure, homodimer.

It is found in the cytoplasm. It carries out the reaction a (3R)-hydroxyacyl-[ACP] = a (2E)-enoyl-[ACP] + H2O. The catalysed reaction is (3R)-hydroxydecanoyl-[ACP] = (2E)-decenoyl-[ACP] + H2O. The enzyme catalyses (2E)-decenoyl-[ACP] = (3Z)-decenoyl-[ACP]. The protein operates within lipid metabolism; fatty acid biosynthesis. Functionally, necessary for the introduction of cis unsaturation into fatty acids. Catalyzes the dehydration of (3R)-3-hydroxydecanoyl-ACP to E-(2)-decenoyl-ACP and then its isomerization to Z-(3)-decenoyl-ACP. Can catalyze the dehydratase reaction for beta-hydroxyacyl-ACPs with saturated chain lengths up to 16:0, being most active on intermediate chain length. This chain is 3-hydroxydecanoyl-[acyl-carrier-protein] dehydratase, found in Salmonella agona (strain SL483).